The primary structure comprises 271 residues: Expansin-B1 (271 aa).

The signal sequence occupies residues 1-24; sequence MQLFPVILPTLCVFLHLLISGSGS. The Expansin-like EG45 domain maps to 58–169; sequence GGACGYGSLV…RRTACKYRGK (112 aa). 3 disulfide bridges follow: cysteine 61–cysteine 90, cysteine 93–cysteine 164, and cysteine 98–cysteine 104. Residues 182–263 enclose the Expansin-like CBD domain; it reads YWLSLLIEYE…NWVPKATYTS (82 aa). Asparagine 242 carries N-linked (GlcNAc...) asparagine glycosylation.

Belongs to the expansin family. Expansin B subfamily.

It is found in the secreted. The protein resides in the cell wall. The protein localises to the membrane. In terms of biological role, may cause loosening and extension of plant cell walls by disrupting non-covalent bonding between cellulose microfibrils and matrix glucans. No enzymatic activity has been found. This chain is Expansin-B1 (EXPB1), found in Arabidopsis thaliana (Mouse-ear cress).